The sequence spans 250 residues: Probable aquaporin TIP2-2 (250 aa).

Met1 carries the N-acetylmethionine modification. Residues 1–24 (MVKIEIGSVGDSFSVASLKAYLSE) lie on the Cytoplasmic side of the membrane. Lys3 is modified (N6,N6-dimethyllysine). A helical membrane pass occupies residues 25–45 (FIATLLFVFAGVGSALAFAKL). Residues 46 to 53 (TSDAALDP) are Vacuolar-facing. The chain crosses the membrane as a helical span at residues 54-74 (AGLVAVAVAHAFALFVGVSIA). Residues 75–101 (ANISGGHLNPAVTLGLAVGGNITVITG) lie on the Cytoplasmic side of the membrane. The NPA 1 signature appears at 83 to 85 (NPA). Residues 102 to 122 (FFYWIAQCLGSIVACLLLVFV) traverse the membrane as a helical segment. The Vacuolar segment spans residues 123–133 (TNGESVPTHGV). A helical transmembrane segment spans residues 134 to 154 (AAGLGAIEGVVMEIVVTFALV). The Cytoplasmic portion of the chain corresponds to 155 to 168 (YTVYATAADPKKGS). The helical transmembrane segment at 169–189 (LGTIAPIAIGFIVGANILAAG) threads the bilayer. Over 190–210 (PFSGGSMNPARSFGPAVVSGD) the chain is Vacuolar. Positions 197–199 (NPA) match the NPA 2 motif. The helical transmembrane segment at 211–231 (FSQIWIYWVGPLVGGALAGLI) threads the bilayer. Residues 232 to 250 (YGDVFIGSYAPAPTTESYP) lie on the Cytoplasmic side of the membrane. Ser248 carries the post-translational modification Phosphoserine.

It belongs to the MIP/aquaporin (TC 1.A.8) family. TIP (TC 1.A.8.10) subfamily. Interacts with cucumber mosaic virus (CMV) Protein 1a. In terms of tissue distribution, expressed above groung and in roots.

The protein localises to the vacuole membrane. Functionally, aquaporins facilitate the transport of water and small neutral solutes across cell membranes. The chain is Probable aquaporin TIP2-2 (TIP2-2) from Arabidopsis thaliana (Mouse-ear cress).